We begin with the raw amino-acid sequence, 190 residues long: Potassium-transporting ATPase KdpC subunit (190 aa).

A helical membrane pass occupies residues 10-30 (TFIFLLLITGGVYPLLTTALG).

The protein belongs to the KdpC family. As to quaternary structure, the system is composed of three essential subunits: KdpA, KdpB and KdpC.

Its subcellular location is the cell inner membrane. Functionally, part of the high-affinity ATP-driven potassium transport (or Kdp) system, which catalyzes the hydrolysis of ATP coupled with the electrogenic transport of potassium into the cytoplasm. This subunit acts as a catalytic chaperone that increases the ATP-binding affinity of the ATP-hydrolyzing subunit KdpB by the formation of a transient KdpB/KdpC/ATP ternary complex. This Escherichia coli O9:H4 (strain HS) protein is Potassium-transporting ATPase KdpC subunit.